The following is a 343-amino-acid chain: Probable xyloglucan endotransglucosylase/hydrolase protein 30 (343 aa).

An N-terminal signal peptide occupies residues 1–23 (MSKSSYNHIFILILCLCLRSSSA). Residues 24–224 (FTNLNTLSFE…YKFAPFVAEF (201 aa)) form the GH16 domain. The Nucleophile role is filled by Glu-109. Catalysis depends on Glu-113, which acts as the Proton donor. Residues Glu-113 and 126–128 (QTN) each bind xyloglucan. Asn-132 carries N-linked (GlcNAc...) asparagine glycosylation. Residues 136–140 (HRGRE), 203–204 (DW), Gly-208, and Arg-285 each bind xyloglucan. Cys-280 and Cys-293 are oxidised to a cystine. Positions 306-343 (TGRLKFGGTEARERRRNRRQQRRPEIEIESDPDDRKLL) are disordered.

Belongs to the glycosyl hydrolase 16 family. XTH group 3 subfamily. Post-translationally, contains at least one intrachain disulfide bond essential for its enzymatic activity. Predominantly expressed in green siliques.

Its subcellular location is the secreted. It is found in the cell wall. The protein resides in the extracellular space. The protein localises to the apoplast. The enzyme catalyses breaks a beta-(1-&gt;4) bond in the backbone of a xyloglucan and transfers the xyloglucanyl segment on to O-4 of the non-reducing terminal glucose residue of an acceptor, which can be a xyloglucan or an oligosaccharide of xyloglucan.. Catalyzes xyloglucan endohydrolysis (XEH) and/or endotransglycosylation (XET). Cleaves and religates xyloglucan polymers, an essential constituent of the primary cell wall, and thereby participates in cell wall construction of growing tissues. This chain is Probable xyloglucan endotransglucosylase/hydrolase protein 30 (XTH30), found in Arabidopsis thaliana (Mouse-ear cress).